Consider the following 479-residue polypeptide: MVPSQRLSRTSSISSNEDPAESHILELEAVSDTNTDCDMDPMEGSEEHSTDGEISSSEEEDEDPTPAHTIPARPSSVVITPTSASFVIPRKKWDLQDKTVTLHRSPLCRDEDEKEETGNSSYTRGHKRRRGEVHGCTDESYGKRRHLPPGARAPRAPRAPRVPRAPRSPRAPRSNRATRGPRSESRGAGRSTRKQARQERSQRPLPNKPWFDMSLVKPVSKITFVTLPSPLASLTLEPIQDPFLQSMLAVAAHPEIGAWQKVQPRHELRRSYKTLREFFTKSTNKDTWLDARMQAIQNAGLCTLVAMLEETIFWLQEITYHGDLPLAPAEDILLACAMSLSKVILTKLKELAPCFLPNTRDYNFVKQLFYITCATARQNKVVETLSSSYVKQPLCLLAAYAAVAPAYINANCRRRHDEVEFLGHYIKNYNPGTLSSLLTEAVETHTRDCRSASCSRLVRAILSPGTGSLGLFFVPGLNQ.

The segment covering 1 to 15 (MVPSQRLSRTSSISS) has biased composition (low complexity). 2 disordered regions span residues 1 to 77 (MVPS…PSSV) and 91 to 210 (KKWD…NKPW). Positions 35-44 (TDCDMDPMEG) are enriched in acidic residues. Basic and acidic residues predominate over residues 132–142 (EVHGCTDESYG). Residues cysteine 354, histidine 445, cysteine 449, and cysteine 454 each coordinate Zn(2+). The segment at 354 to 454 (CFLPNTRDYN…HTRDCRSASC (101 aa)) adopts a CHC2-type zinc-finger fold.

It belongs to the HHV-1 ICP27 protein family. In terms of assembly, interacts with host XPO1 and with the XPO1 export pathway components small GTPase RAN and nucleoporin NUP214. Interacts with host SPEN, OTT1 and OTT3. Interacts with host SRSF1, SRSF3, SRSF7 and SRPK1. Interacts with host DHX9; this interaction may have an inhibitory effect on virion production. Interacts (via N-terminus) with host NXF1; this interaction plays a role in mRNA export. In terms of processing, phosphorylated by cellular protein kinase CK2.

It is found in the host nucleus. It localises to the host cytoplasm. Its function is as follows. Promotes the nuclear export of a subset of early and late viral mRNAs by interacting with mRNAs and cellular export proteins. Additionally may prevent the establishment of cellular antiviral state, by acting as an alternative splicing factor for cellular RNAs such as STAT1, resulting in a STAT1 mRNA incapable of producing the STAT1alpha isoform. This Homo sapiens (Human) protein is mRNA export factor ICP27 homolog.